Here is a 318-residue protein sequence, read N- to C-terminus: Receptor homology region, transmembrane domain- and RING domain-containing protein 5 (318 aa).

The N-terminal stretch at Met-1–Ala-20 is a signal peptide. Residues Val-22–Ser-163 lie on the Lumenal side of the membrane. A disulfide bridge connects residues Cys-62 and Cys-87. A PA domain is found at Glu-70–Tyr-143. The N-linked (GlcNAc...) asparagine glycan is linked to Asn-121. Residues Ile-164 to Val-184 form a helical membrane-spanning segment. Over Val-185 to Leu-318 the chain is Cytoplasmic. The RING-type; atypical zinc finger occupies Cys-233–Lys-275.

Its subcellular location is the prevacuolar compartment membrane. The protein resides in the protein storage vacuole membrane. Its function is as follows. Involved in the trafficking of vacuolar proteins. May function as a sorting receptor for protein trafficking to the protein storage vacuole (PSV). This chain is Receptor homology region, transmembrane domain- and RING domain-containing protein 5 (RMR5), found in Arabidopsis thaliana (Mouse-ear cress).